We begin with the raw amino-acid sequence, 283 residues long: Elongation factor Ts (283 aa).

Residues 84 to 87 (TDFV) are involved in Mg(2+) ion dislocation from EF-Tu.

It belongs to the EF-Ts family.

It is found in the cytoplasm. Functionally, associates with the EF-Tu.GDP complex and induces the exchange of GDP to GTP. It remains bound to the aminoacyl-tRNA.EF-Tu.GTP complex up to the GTP hydrolysis stage on the ribosome. The polypeptide is Elongation factor Ts (Bifidobacterium longum subsp. infantis (strain ATCC 15697 / DSM 20088 / JCM 1222 / NCTC 11817 / S12)).